We begin with the raw amino-acid sequence, 95 residues long: Suppressor of silencing 2b (95 aa).

Positions 8-18 (LHEIIRKLERM) are homotetramerization. Residues 8–40 (LHEIIRKLERMNQKKQAQRKRHKLNRKERGHKS) adopt a coiled-coil conformation. The interval 16 to 49 (ERMNQKKQAQRKRHKLNRKERGHKSPSEQRRSEL) is disordered. A compositionally biased stretch (basic residues) spans 23-37 (QAQRKRHKLNRKERG). Residues 26–30 (RKRHK) carry the Nuclear localization signal motif. The span at 38-49 (HKSPSEQRRSEL) shows a compositional bias: basic and acidic residues.

The protein belongs to the cucumovirus/ilarvirus protein 2b family. Homodimer. Homotetramer (dimer of dimers).

It localises to the host nucleus. In terms of biological role, acts as a suppressor of RNA-mediated gene silencing, also known as post-transcriptional gene silencing (PTGS), a mechanism of plant viral defense that limits the accumulation of viral RNAs. Forms a homodimer to measure siRNA duplex in a length-preference mode. Binds to both siRNA duplexes (19bp) and long siRNA duplexes (30bp). The sequence is that of Suppressor of silencing 2b from Canna (Florist's daisy).